A 2005-amino-acid chain; its full sequence is Structural maintenance of chromosomes flexible hinge domain-containing protein 1 (2005 aa).

Gly residues predominate over residues 1–13; the sequence is MAAADGGGPGGAS. Residues 1-23 form a disordered region; that stretch reads MAAADGGGPGGASVGTEEDGGGV. N-acetylalanine is present on A2. An ATPase activity domain region spans residues 111-702; sequence TKERIDFLPH…LSVTWPEGDE (592 aa). K1349 is modified (N6-acetyllysine). Glycyl lysine isopeptide (Lys-Gly) (interchain with G-Cter in SUMO2) cross-links involve residues K1374 and K1496. T1499 is modified (phosphothreonine). The 128-residue stretch at 1720–1847 folds into the SMC hinge domain; the sequence is GDVLGKIAHL…DNLDAANHYR (128 aa). K1802 carries the post-translational modification N6-succinyllysine. The residue at position 1974 (S1974) is a Phosphoserine.

The protein belongs to the SMC family. Highly divergent. In terms of assembly, homodimer; homodimerizes via its SMC hinge domain. Interacts with LRIF1. Sumoylated with SUMO1.

The protein resides in the chromosome. The catalysed reaction is ATP + H2O = ADP + phosphate + H(+). In terms of biological role, non-canonical member of the structural maintenance of chromosomes (SMC) protein family that plays a key role in epigenetic silencing by regulating chromatin architecture. Promotes heterochromatin formation in both autosomes and chromosome X, probably by mediating the merge of chromatin compartments. Plays a key role in chromosome X inactivation in females by promoting the spreading of heterochromatin. Recruited to inactivated chromosome X by Xist RNA and acts by mediating the merge of chromatin compartments: promotes random chromatin interactions that span the boundaries of existing structures, leading to create a compartment-less architecture typical of inactivated chromosome X. Required to facilitate Xist RNA spreading. Also required for silencing of a subset of clustered autosomal loci in somatic cells, such as the DUX4 locus. Has ATPase activity; may participate in structural manipulation of chromatin in an ATP-dependent manner as part of its role in gene expression regulation. Also plays a role in DNA repair: localizes to sites of DNA double-strand breaks in response to DNA damage to promote the repair of DNA double-strand breaks. Acts by promoting non-homologous end joining (NHEJ) and inhibiting homologous recombination (HR) repair. The sequence is that of Structural maintenance of chromosomes flexible hinge domain-containing protein 1 from Homo sapiens (Human).